The following is a 69-amino-acid chain: Cytochrome c oxidase subunit 8A, mitochondrial (69 aa).

Residues Met-1 to Lys-25 constitute a mitochondrion transit peptide. Residues Ser-2–Leu-19 carry the SIFI-degron motif. Over Ile-26–Gly-36 the chain is Mitochondrial matrix. The chain crosses the membrane as a helical span at residues Ile-37–Ser-60. The Mitochondrial intermembrane segment spans residues His-61–Glu-69.

Belongs to the cytochrome c oxidase VIII family. As to quaternary structure, component of the cytochrome c oxidase (complex IV, CIV), a multisubunit enzyme composed of 14 subunits. The complex is composed of a catalytic core of 3 subunits MT-CO1, MT-CO2 and MT-CO3, encoded in the mitochondrial DNA, and 11 supernumerary subunits COX4I, COX5A, COX5B, COX6A, COX6B, COX6C, COX7A, COX7B, COX7C, COX8 and NDUFA4, which are encoded in the nuclear genome. The complex exists as a monomer or a dimer and forms supercomplexes (SCs) in the inner mitochondrial membrane with NADH-ubiquinone oxidoreductase (complex I, CI) and ubiquinol-cytochrome c oxidoreductase (cytochrome b-c1 complex, complex III, CIII), resulting in different assemblies (supercomplex SCI(1)III(2)IV(1) and megacomplex MCI(2)III(2)IV(2)). Post-translationally, in response to mitochondrial stress, the precursor protein is ubiquitinated by the SIFI complex in the cytoplasm before mitochondrial import, leading to its degradation. Within the SIFI complex, UBR4 initiates ubiquitin chain that are further elongated or branched by KCMF1.

The protein resides in the mitochondrion inner membrane. It functions in the pathway energy metabolism; oxidative phosphorylation. Its function is as follows. Component of the cytochrome c oxidase, the last enzyme in the mitochondrial electron transport chain which drives oxidative phosphorylation. The respiratory chain contains 3 multisubunit complexes succinate dehydrogenase (complex II, CII), ubiquinol-cytochrome c oxidoreductase (cytochrome b-c1 complex, complex III, CIII) and cytochrome c oxidase (complex IV, CIV), that cooperate to transfer electrons derived from NADH and succinate to molecular oxygen, creating an electrochemical gradient over the inner membrane that drives transmembrane transport and the ATP synthase. Cytochrome c oxidase is the component of the respiratory chain that catalyzes the reduction of oxygen to water. Electrons originating from reduced cytochrome c in the intermembrane space (IMS) are transferred via the dinuclear copper A center (CU(A)) of subunit 2 and heme A of subunit 1 to the active site in subunit 1, a binuclear center (BNC) formed by heme A3 and copper B (CU(B)). The BNC reduces molecular oxygen to 2 water molecules using 4 electrons from cytochrome c in the IMS and 4 protons from the mitochondrial matrix. In Gorilla gorilla gorilla (Western lowland gorilla), this protein is Cytochrome c oxidase subunit 8A, mitochondrial (COX8A).